Here is a 221-residue protein sequence, read N- to C-terminus: Adenylate kinase (221 aa).

Residue 10-15 participates in ATP binding; sequence GAGKGT. The interval 30-59 is NMP; it reads STGDMLRAAVKAGTPLGIEAKKVMDAGGLV. Residues T31, R36, 57–59, 85–88, and Q92 each bind AMP; these read GLV and GFPR. The tract at residues 122–159 is LID; that stretch reads GRRVHVASGRTYHVKFNPPKADMVDDETGEALIQRDDD. ATP-binding positions include R123 and 132-133; that span reads TY. R156 and R167 together coordinate AMP. ATP is bound at residue G207.

It belongs to the adenylate kinase family. As to quaternary structure, monomer.

It localises to the cytoplasm. It catalyses the reaction AMP + ATP = 2 ADP. Its pathway is purine metabolism; AMP biosynthesis via salvage pathway; AMP from ADP: step 1/1. In terms of biological role, catalyzes the reversible transfer of the terminal phosphate group between ATP and AMP. Plays an important role in cellular energy homeostasis and in adenine nucleotide metabolism. The chain is Adenylate kinase from Cupriavidus metallidurans (strain ATCC 43123 / DSM 2839 / NBRC 102507 / CH34) (Ralstonia metallidurans).